A 546-amino-acid polypeptide reads, in one-letter code: Zinc finger and BTB domain-containing protein 7A (546 aa).

The 68-residue stretch at 34-101 (CDVVILVEGQ…AYTATLTVST (68 aa)) folds into the BTB domain. The tract at residues 189–288 (QEDEEEPDCN…SFVPTGAEAE (100 aa)) is disordered. 3 C2H2-type zinc fingers span residues 359 to 381 (QKCP…IRTH), 387 to 409 (YECN…MRKH), and 415 to 437 (YLCQ…MRVH). The C2H2-type 4; atypical zinc-finger motif lies at 443–467 (YQCDSCFKTFVRSDHLHRHLKKDGC). The disordered stretch occupies residues 463-546 (KKDGCNGIPS…AAEGSAPGPS (84 aa)). Positions 534–546 (AGGAAEGSAPGPS) are enriched in low complexity.

Its subcellular location is the nucleus. Its function is as follows. Transcription factor that represses the transcription of a wide range of genes involved in cell proliferation and differentiation. Directly and specifically binds to the consensus sequence 5'-[GA][CA]GACCCCCCCCC-3' and represses transcription both by regulating the organization of chromatin and through the direct recruitment of transcription factors to gene regulatory regions. May also play a role, independently of its transcriptional activity, in double-strand break repair via classical non-homologous end joining/cNHEJ and in alternative splicing. The polypeptide is Zinc finger and BTB domain-containing protein 7A (Gallus gallus (Chicken)).